The primary structure comprises 279 residues: Large ribosomal subunit protein uL2 (279 aa).

Disordered stretches follow at residues 1-59 and 224-279; these read MGIR…GGHK and VAMN…KNKR. Basic residues-rich tracts occupy residues 50–59 and 269–279; these read TTRHKGGGHK and VRRRRTGKNKR.

Belongs to the universal ribosomal protein uL2 family. In terms of assembly, part of the 50S ribosomal subunit. Forms a bridge to the 30S subunit in the 70S ribosome.

In terms of biological role, one of the primary rRNA binding proteins. Required for association of the 30S and 50S subunits to form the 70S ribosome, for tRNA binding and peptide bond formation. It has been suggested to have peptidyltransferase activity; this is somewhat controversial. Makes several contacts with the 16S rRNA in the 70S ribosome. The polypeptide is Large ribosomal subunit protein uL2 (Arthrobacter sp. (strain FB24)).